A 688-amino-acid chain; its full sequence is Polyphosphate kinase (688 aa).

Asn-45 contacts ATP. Arg-375 and Arg-405 together coordinate Mg(2+). A PLD phosphodiesterase domain is found at 430 to 464 (PGLKIHAKLFLISRKEGDDVVRYAHIGTGNFNEKT). The Phosphohistidine intermediate role is filled by His-435. Residues Tyr-468, Arg-564, and His-592 each coordinate ATP.

This sequence belongs to the polyphosphate kinase 1 (PPK1) family. Mg(2+) is required as a cofactor. In terms of processing, an intermediate of this reaction is the autophosphorylated ppk in which a phosphate is covalently linked to a histidine residue through a N-P bond.

The catalysed reaction is [phosphate](n) + ATP = [phosphate](n+1) + ADP. Catalyzes the reversible transfer of the terminal phosphate of ATP to form a long-chain polyphosphate (polyP). This Salmonella typhimurium (strain LT2 / SGSC1412 / ATCC 700720) protein is Polyphosphate kinase.